The primary structure comprises 878 residues: Coatomer subunit gamma (878 aa).

HEAT repeat units lie at residues 64-101 (REATDCFFAMTKLFQSKDVVLRRMVYLGIKELSSVAED), 287-324 (RMLSPAFSILQLFCSSPKATLRFAAVRTLNKVAMTHPA), 326-359 (VTTCNLDLEGLITDSNRSVATLAITTLLKTGAES), 360-396 (SVERLMKQISTFVAEISDEFKIVVVQAICALCTKYPR), 399-434 (TVLMNFLSGMLREEGGLEYKTSIVDTIITIIEENAD), and 471-508 (ATPSKYIRFIYNRVILESPIVRAAAVTALSQFGASCPA).

The protein belongs to the COPG family. In terms of assembly, oligomeric complex that consists of at least the alpha, beta, beta', gamma, delta, epsilon and zeta subunits.

Its subcellular location is the cytoplasm. The protein localises to the golgi apparatus membrane. The protein resides in the cytoplasmic vesicle. It localises to the COPI-coated vesicle membrane. It is found in the endoplasmic reticulum. In terms of biological role, the coatomer is a cytosolic protein complex that binds to dilysine motifs and reversibly associates with Golgi non-clathrin-coated vesicles, which further mediate biosynthetic protein transport from the ER, via the Golgi up to the trans Golgi network. Coatomer complex is required for budding from Golgi membranes, and is essential for the retrograde Golgi-to-ER transport of dilysine-tagged proteins. Required for limiting lipid storage in lipid droplets. Involved in the expansion of luminal extracellular matrices and apical membrane during tubulogenesis. Required in the tracheal epithelium for luminal protein secretion and diametric tube growth. In salivary glands, required for deposition of O-glycans and luminal extracellular matrix assembly. Required for epidermal morphogenesis and cuticle development. This is Coatomer subunit gamma from Drosophila pseudoobscura pseudoobscura (Fruit fly).